A 308-amino-acid polypeptide reads, in one-letter code: Aspartate carbamoyltransferase catalytic subunit (308 aa).

Residues Arg-50 and Thr-51 each contribute to the carbamoyl phosphate site. Residue Lys-78 coordinates L-aspartate. Residues Arg-100, His-131, and Gln-134 each contribute to the carbamoyl phosphate site. Positions 164 and 216 each coordinate L-aspartate. Carbamoyl phosphate is bound by residues Ala-259 and Pro-260.

Belongs to the aspartate/ornithine carbamoyltransferase superfamily. ATCase family. As to quaternary structure, heterododecamer (2C3:3R2) of six catalytic PyrB chains organized as two trimers (C3), and six regulatory PyrI chains organized as three dimers (R2).

It catalyses the reaction carbamoyl phosphate + L-aspartate = N-carbamoyl-L-aspartate + phosphate + H(+). It participates in pyrimidine metabolism; UMP biosynthesis via de novo pathway; (S)-dihydroorotate from bicarbonate: step 2/3. Functionally, catalyzes the condensation of carbamoyl phosphate and aspartate to form carbamoyl aspartate and inorganic phosphate, the committed step in the de novo pyrimidine nucleotide biosynthesis pathway. The sequence is that of Aspartate carbamoyltransferase catalytic subunit from Oenococcus oeni (strain ATCC BAA-331 / PSU-1).